A 511-amino-acid chain; its full sequence is MVKYMNLIVLGMLMFGVFVTLSLGSSTALTVYSPFPGEHVALINPKELILNISVYDPIAPVNSTVGVTISGPYDIKMTSAGVPVGELNSSHMLTVTDYAFPVTLFEANGTQISAFIPGQYNVTISVAGCSETIPIYVISPNEIEILVCVYSNGVPLPGATVSIYNVTNGELLLTNTTNSQGLAELTVPYVYTMTNEYNVTAVKPGYQLVYKEVTVPADHITPVTVKLTTKPITFVLTPVYFQDMGVIEPAEPAQLPGTPEPVYVASAYMGTTFSIIINATESGMPVQGATISASYLISGKQMSSTATYIGNGQYNLSIVLPNSTVPYDLELVITGTYQTNTYTFITLLSVQPNFYCEIQRLQSEVSVLESEVDQLKVEIQSLNETLTLQASEIASLKTYLEGNVSYFSMQISSLESEIKYLNSTLMTLSSELTTVNSTLTSEVNSLTSEVNSLSTQVSTLSTEVNNLNTTINNDNQKISSLTTLVYGGIILGVIALIIAIVAVVLVFRKVA.

The first 24 residues, 1–24 (MVKYMNLIVLGMLMFGVFVTLSLG), serve as a signal peptide directing secretion. Residues 358–392 (IQRLQSEVSVLESEVDQLKVEIQSLNETLTLQASE) adopt a coiled-coil conformation. Residues 487-507 (GGIILGVIALIIAIVAVVLVF) traverse the membrane as a helical segment.

This sequence belongs to the Sulfolobales SlaB family. The mushroom-shaped unit cells of the Sulfolobales' S-layers may consist of three SlaB subunits and six SlaA subunits.

It is found in the secreted. The protein localises to the cell wall. It localises to the S-layer. Its subcellular location is the cell membrane. S-layer small protein. May anchor the complex to the cell membrane. The polypeptide is S-layer protein B (Acidianus ambivalens (Desulfurolobus ambivalens)).